The chain runs to 1588 residues: Pentafunctional AROM polypeptide (1588 aa).

A 3-dehydroquinate synthase region spans residues 1–392; the sequence is MVQLAKVPIL…YGDSAQFVSD (392 aa). Residues 43–45, 78–81, 109–111, and aspartate 114 each bind NAD(+); these read DTN, ETSK, and GGV. A 7-phospho-2-dehydro-3-deoxy-D-arabino-heptonate-binding site is contributed by arginine 125. 134–135 provides a ligand contact to NAD(+); it reads TS. 2 residues coordinate 7-phospho-2-dehydro-3-deoxy-D-arabino-heptonate: aspartate 141 and lysine 147. Lysine 156 contributes to the NAD(+) binding site. Asparagine 157 serves as a coordination point for 7-phospho-2-dehydro-3-deoxy-D-arabino-heptonate. NAD(+) contacts are provided by residues 174 to 177 and asparagine 185; that span reads WLET. A Zn(2+)-binding site is contributed by glutamate 189. Residues 189–192 and lysine 258 contribute to the 7-phospho-2-dehydro-3-deoxy-D-arabino-heptonate site; that span reads EVIK. Glutamate 268 (proton acceptor; for 3-dehydroquinate synthase activity) is an active-site residue. 7-phospho-2-dehydro-3-deoxy-D-arabino-heptonate contacts are provided by residues 272 to 276 and histidine 279; that span reads RNLLN. Residue histidine 279 coordinates Zn(2+). Histidine 283 serves as the catalytic Proton acceptor; for 3-dehydroquinate synthase activity. Residues histidine 295 and lysine 364 each coordinate 7-phospho-2-dehydro-3-deoxy-D-arabino-heptonate. Histidine 295 is a Zn(2+) binding site. The EPSP synthase stretch occupies residues 405–871; that stretch reads VYPFKDIPAD…WDVLHSELGA (467 aa). The active-site For EPSP synthase activity is the cysteine 853. The segment at 890–1080 is shikimate kinase; it reads SVVIIGMRAA…IPSGRSAFVC (191 aa). Residue 895–902 coordinates ATP; the sequence is GMRAAGKT. Residues 1081-1293 form a 3-dehydroquinase region; the sequence is LTFDDLTEQT…AAPGQLTVAQ (213 aa). Histidine 1198 (proton acceptor; for 3-dehydroquinate dehydratase activity) is an active-site residue. Lysine 1227 (schiff-base intermediate with substrate; for 3-dehydroquinate dehydratase activity) is an active-site residue. Residues 1306–1588 are shikimate dehydrogenase; sequence PKELFVVGKP…KAIFDAVTKE (283 aa).

The protein in the N-terminal section; belongs to the sugar phosphate cyclases superfamily. Dehydroquinate synthase family. This sequence in the 2nd section; belongs to the EPSP synthase family. It in the 3rd section; belongs to the shikimate kinase family. In the 4th section; belongs to the type-I 3-dehydroquinase family. The protein in the C-terminal section; belongs to the shikimate dehydrogenase family. Homodimer. Zn(2+) is required as a cofactor.

Its subcellular location is the cytoplasm. The enzyme catalyses 7-phospho-2-dehydro-3-deoxy-D-arabino-heptonate = 3-dehydroquinate + phosphate. It carries out the reaction 3-dehydroquinate = 3-dehydroshikimate + H2O. It catalyses the reaction shikimate + NADP(+) = 3-dehydroshikimate + NADPH + H(+). The catalysed reaction is shikimate + ATP = 3-phosphoshikimate + ADP + H(+). The enzyme catalyses 3-phosphoshikimate + phosphoenolpyruvate = 5-O-(1-carboxyvinyl)-3-phosphoshikimate + phosphate. It participates in metabolic intermediate biosynthesis; chorismate biosynthesis; chorismate from D-erythrose 4-phosphate and phosphoenolpyruvate: step 2/7. It functions in the pathway metabolic intermediate biosynthesis; chorismate biosynthesis; chorismate from D-erythrose 4-phosphate and phosphoenolpyruvate: step 3/7. The protein operates within metabolic intermediate biosynthesis; chorismate biosynthesis; chorismate from D-erythrose 4-phosphate and phosphoenolpyruvate: step 4/7. Its pathway is metabolic intermediate biosynthesis; chorismate biosynthesis; chorismate from D-erythrose 4-phosphate and phosphoenolpyruvate: step 5/7. It participates in metabolic intermediate biosynthesis; chorismate biosynthesis; chorismate from D-erythrose 4-phosphate and phosphoenolpyruvate: step 6/7. Functionally, the AROM polypeptide catalyzes 5 consecutive enzymatic reactions in prechorismate polyaromatic amino acid biosynthesis. This chain is Pentafunctional AROM polypeptide, found in Saccharomyces cerevisiae (strain RM11-1a) (Baker's yeast).